A 497-amino-acid chain; its full sequence is Lysine--tRNA ligase (497 aa).

Mg(2+) is bound by residues Glu-409 and Glu-416.

This sequence belongs to the class-II aminoacyl-tRNA synthetase family. As to quaternary structure, homodimer. Requires Mg(2+) as cofactor.

It is found in the cytoplasm. It carries out the reaction tRNA(Lys) + L-lysine + ATP = L-lysyl-tRNA(Lys) + AMP + diphosphate. In Streptococcus pyogenes serotype M3 (strain ATCC BAA-595 / MGAS315), this protein is Lysine--tRNA ligase.